Reading from the N-terminus, the 193-residue chain is Peptidyl-tRNA hydrolase (193 aa).

Tyrosine 17 lines the tRNA pocket. Histidine 22 (proton acceptor) is an active-site residue. 3 residues coordinate tRNA: phenylalanine 68, asparagine 70, and asparagine 116.

It belongs to the PTH family. As to quaternary structure, monomer.

The protein resides in the cytoplasm. The catalysed reaction is an N-acyl-L-alpha-aminoacyl-tRNA + H2O = an N-acyl-L-amino acid + a tRNA + H(+). Hydrolyzes ribosome-free peptidyl-tRNAs (with 1 or more amino acids incorporated), which drop off the ribosome during protein synthesis, or as a result of ribosome stalling. Functionally, catalyzes the release of premature peptidyl moieties from peptidyl-tRNA molecules trapped in stalled 50S ribosomal subunits, and thus maintains levels of free tRNAs and 50S ribosomes. The protein is Peptidyl-tRNA hydrolase of Acinetobacter baylyi (strain ATCC 33305 / BD413 / ADP1).